The chain runs to 303 residues: NAD kinase (303 aa).

Catalysis depends on Asp71, which acts as the Proton acceptor. Residues 71 to 72 (DG), 145 to 146 (ND), Arg156, Arg173, Asp175, 186 to 191 (TGYSLS), and Gln245 each bind NAD(+).

This sequence belongs to the NAD kinase family. The cofactor is a divalent metal cation.

Its subcellular location is the cytoplasm. The catalysed reaction is NAD(+) + ATP = ADP + NADP(+) + H(+). Functionally, involved in the regulation of the intracellular balance of NAD and NADP, and is a key enzyme in the biosynthesis of NADP. Catalyzes specifically the phosphorylation on 2'-hydroxyl of the adenosine moiety of NAD to yield NADP. This is NAD kinase from Magnetococcus marinus (strain ATCC BAA-1437 / JCM 17883 / MC-1).